Consider the following 268-residue polypeptide: Interleukin-1 alpha (268 aa).

A propeptide spanning residues 1 to 112 is cleaved from the precursor; it reads MAKVPDLFED…NTEEEIIKPR (112 aa). Lysine 82 carries the post-translational modification N6-acetyllysine. A nuclear localization signal (NLS) region spans residues 82-86; that stretch reads KKRRL. A Phosphoserine modification is found at serine 87. Asparagine 102 and asparagine 141 each carry an N-linked (GlcNAc...) asparagine glycan.

Belongs to the IL-1 family. In terms of assembly, monomer. Interacts with TMED10; the interaction mediates the translocation from the cytoplasm into the ERGIC (endoplasmic reticulum-Golgi intermediate compartment) and thereby secretion. Interacts with IL1R1. Interacts with S100A13; this interaction is the first step in the export of IL1A, followed by direct translocation of this complex across the plasma membrane. Post-translationally, acetylated within its nuclear localization sequence, which impacts subcellular localization. Proteolytic processed by CAPN1 in a calcium-dependent manner. Cleavage from 31 kDa precursor to 18 kDa biologically active molecules. In terms of processing, phosphorylated. Phosphorylation greatly enhances susceptibility to digestion and promotes the conversion of pre-IL1A alpha to the biologically active IL1A.

Its subcellular location is the nucleus. The protein resides in the cytoplasm. The protein localises to the secreted. In terms of biological role, cytokine constitutively present intracellularly in nearly all resting non-hematopoietic cells that plays an important role in inflammation and bridges the innate and adaptive immune systems. After binding to its receptor IL1R1 together with its accessory protein IL1RAP, forms the high affinity interleukin-1 receptor complex. Signaling involves the recruitment of adapter molecules such as MYD88, IRAK1 or IRAK4. In turn, mediates the activation of NF-kappa-B and the three MAPK pathways p38, p42/p44 and JNK pathways. Within the cell, acts as an alarmin and cell death results in its liberation in the extracellular space after disruption of the cell membrane to induce inflammation and alert the host to injury or damage. In addition to its role as a danger signal, which occurs when the cytokine is passively released by cell necrosis, directly senses DNA damage and acts as signal for genotoxic stress without loss of cell integrity. This Bubalus carabanensis (Swamp type water buffalo) protein is Interleukin-1 alpha (IL1A).